The chain runs to 430 residues: Putative glycylpeptide N-tetradecanoyltransferase 2 (430 aa).

Tetradecanoyl-CoA is bound by residues 47–50 (HKFW), 181–183 (LCV), and 189–193 (SKGLA). The active-site Proton acceptor; via carboxylate is the L430.

Belongs to the NMT family.

It carries out the reaction N-terminal glycyl-[protein] + tetradecanoyl-CoA = N-tetradecanoylglycyl-[protein] + CoA + H(+). May add a myristoyl group to the N-terminal glycine residue of certain cellular proteins. In Arabidopsis thaliana (Mouse-ear cress), this protein is Putative glycylpeptide N-tetradecanoyltransferase 2 (NMT2).